A 376-amino-acid chain; its full sequence is NADPH oxidase organizer 1 (376 aa).

One can recognise a PX domain in the interval 1–131 (MAGPRYPVSV…GFFAPQPLDL (131 aa)). SH3 domains lie at 163–225 (LEAQ…EAAP) and 237–296 (SSGP…PEGL). A disordered region spans residues 302 to 376 (GTGFRGGDDP…DSVPHPTTEQ (75 aa)). A compositionally biased stretch (pro residues) spans 326–335 (APPPTVPTRP). Residues 328 to 337 (PPTVPTRPSP) are proline-rich region; mediates mutually exclusive interactions with itself and NOXA1.

In terms of assembly, interacts with NOX1, NOXA1, CYBA/p22phox and NCF2/p67phox. Interacts with SH3PXD2A and SH3PXD2B. In terms of tissue distribution, expressed in testis, small and large intestines, liver, kidney and pancreas. Isoform 3 is mainly expressed in colon. Isoform 1 is preferentially expressed in testis.

The protein resides in the cell membrane. Its function is as follows. Constitutively potentiates the superoxide-generating activity of NOX1 and NOX3 and is required for the biogenesis of otoconia/otolith, which are crystalline structures of the inner ear involved in the perception of gravity. Isoform 3 is more potent than isoform 1 in activating NOX3. Together with NOXA1, may also substitute to NCF1/p47phox and NCF2/p67phox in supporting the phagocyte NOX2/gp91phox superoxide-generating activity. The polypeptide is NADPH oxidase organizer 1 (NOXO1) (Homo sapiens (Human)).